Here is a 339-residue protein sequence, read N- to C-terminus: tRNA dimethylallyltransferase (339 aa).

Residue 36-43 (GPTGSGKT) coordinates ATP. 38–43 (TGSGKT) is a substrate binding site. The tract at residues 61-64 (DSMQ) is interaction with substrate tRNA.

The protein belongs to the IPP transferase family. Monomer. Mg(2+) serves as cofactor.

It catalyses the reaction adenosine(37) in tRNA + dimethylallyl diphosphate = N(6)-dimethylallyladenosine(37) in tRNA + diphosphate. Catalyzes the transfer of a dimethylallyl group onto the adenine at position 37 in tRNAs that read codons beginning with uridine, leading to the formation of N6-(dimethylallyl)adenosine (i(6)A). The sequence is that of tRNA dimethylallyltransferase from Chlamydia trachomatis serovar L2 (strain ATCC VR-902B / DSM 19102 / 434/Bu).